Reading from the N-terminus, the 345-residue chain is Leucine zipper protein 2 (345 aa).

The first 19 residues, 1 to 19, serve as a signal peptide directing secretion; that stretch reads MKFNAAHYLLPLLPALVLS. The stretch at 16–211 forms a coiled coil; the sequence is LVLSTRQDYE…QMKAMKETVQ (196 aa). N133 carries an N-linked (GlcNAc...) asparagine glycan. The interval 164 to 192 is leucine-zipper; sequence LRYGKKDLLFKAQQLTELEQKLAVAKNEL. The tract at residues 223 to 345 is disordered; sequence PPLSLMPSNP…GTPAREEKLL (123 aa). The span at 261-277 shows a compositional bias: basic and acidic residues; the sequence is GHHDSSQVQATKEESRR. Positions 298–313 are enriched in polar residues; it reads PQSNSTAESELTTQKL. The N-linked (GlcNAc...) asparagine glycan is linked to N301.

Expression found only in the brain and spinal cord.

The protein localises to the secreted. In Mus musculus (Mouse), this protein is Leucine zipper protein 2 (Luzp2).